The following is a 940-amino-acid chain: UvrABC system protein A (940 aa).

31-38 is a binding site for ATP; sequence GLSGSGKS. The C4-type zinc-finger motif lies at 253-280; it reads CPICGYSMRELEPRLFSFNNPAGACPTC. ABC transporter domains are found at residues 310–587 and 607–937; these read WDRR…PESL and ANPE…RFLK. 640–647 is an ATP binding site; it reads GVSGSGKS. The C4-type zinc-finger motif lies at 740-766; sequence CEACQGDGVIKVEMHFLPDIYVPCDQC.

This sequence belongs to the ABC transporter superfamily. UvrA family. Forms a heterotetramer with UvrB during the search for lesions.

It localises to the cytoplasm. In terms of biological role, the UvrABC repair system catalyzes the recognition and processing of DNA lesions. UvrA is an ATPase and a DNA-binding protein. A damage recognition complex composed of 2 UvrA and 2 UvrB subunits scans DNA for abnormalities. When the presence of a lesion has been verified by UvrB, the UvrA molecules dissociate. The polypeptide is UvrABC system protein A (Escherichia coli O6:H1 (strain CFT073 / ATCC 700928 / UPEC)).